The following is a 213-amino-acid chain: ATP phosphoribosyltransferase (213 aa).

It belongs to the ATP phosphoribosyltransferase family. Short subfamily. In terms of assembly, heteromultimer composed of HisG and HisZ subunits.

It localises to the cytoplasm. It catalyses the reaction 1-(5-phospho-beta-D-ribosyl)-ATP + diphosphate = 5-phospho-alpha-D-ribose 1-diphosphate + ATP. The protein operates within amino-acid biosynthesis; L-histidine biosynthesis; L-histidine from 5-phospho-alpha-D-ribose 1-diphosphate: step 1/9. Functionally, catalyzes the condensation of ATP and 5-phosphoribose 1-diphosphate to form N'-(5'-phosphoribosyl)-ATP (PR-ATP). Has a crucial role in the pathway because the rate of histidine biosynthesis seems to be controlled primarily by regulation of HisG enzymatic activity. In Teredinibacter turnerae (strain ATCC 39867 / T7901), this protein is ATP phosphoribosyltransferase.